A 266-amino-acid polypeptide reads, in one-letter code: Glucosamine-6-phosphate deaminase (266 aa).

Asp72 acts as the Proton acceptor; for enolization step in catalysis. The For ring-opening step role is filled by Asp141. Residue His143 is the Proton acceptor; for ring-opening step of the active site. Glu148 (for ring-opening step) is an active-site residue.

It belongs to the glucosamine/galactosamine-6-phosphate isomerase family. NagB subfamily. In terms of assembly, homohexamer.

It catalyses the reaction alpha-D-glucosamine 6-phosphate + H2O = beta-D-fructose 6-phosphate + NH4(+). Its pathway is amino-sugar metabolism; N-acetylneuraminate degradation; D-fructose 6-phosphate from N-acetylneuraminate: step 5/5. With respect to regulation, allosterically activated by N-acetylglucosamine 6-phosphate (GlcNAc6P). Its function is as follows. Catalyzes the reversible isomerization-deamination of glucosamine 6-phosphate (GlcN6P) to form fructose 6-phosphate (Fru6P) and ammonium ion. This is Glucosamine-6-phosphate deaminase from Aliivibrio salmonicida (strain LFI1238) (Vibrio salmonicida (strain LFI1238)).